The sequence spans 109 residues: Hainantoxin-XVIII (109 aa).

The signal sequence occupies residues 1–18 (MKLSIIIIATSLVIAVVA). The propeptide occupies 19 to 46 (FPSKDSKAIENDKTEQRMEIVVQETARA). 4 disulfides stabilise this stretch: cysteine 47–cysteine 62, cysteine 55–cysteine 68, cysteine 59–cysteine 108, and cysteine 61–cysteine 81.

Belongs to the neurotoxin 25 family. F7 subfamily. In terms of tissue distribution, expressed by the venom gland.

It localises to the secreted. Its function is as follows. Putative ion channel inhibitor. The sequence is that of Hainantoxin-XVIII from Cyriopagopus hainanus (Chinese bird spider).